The sequence spans 685 residues: Phenoloxidase subunit 1 (685 aa).

Cu cation contacts are provided by H209, H213, and H239. Residue E351 is the Proton acceptor of the active site. 3 residues coordinate Cu cation: H366, H370, and H406. Intrachain disulfides connect C580-C622 and C582-C629.

In terms of assembly, heterodimer. Forms a complex with an interleukin 1-like protein as a consequence of a host defense response. It depends on Cu(2+) as a cofactor. In terms of processing, the N-terminus is blocked. In terms of tissue distribution, synthesized by oenocytoids, a type of hemocyte, and released into the hemolymph plasma.

The protein localises to the secreted. It carries out the reaction 2 L-dopa + O2 = 2 L-dopaquinone + 2 H2O. The catalysed reaction is L-tyrosine + O2 = L-dopaquinone + H2O. With respect to regulation, activated by immulectin and lipopolysaccharide. Its function is as follows. This is a copper-containing oxidase that functions in the formation of pigments such as melanins and other polyphenolic compounds. Catalyzes the rate-limiting conversions of tyrosine to DOPA, DOPA to DOPA-quinone and possibly 5,6 dihydroxyindole to indole-5'6 quinone. Binds to the surface of hemocytes and is involved in hemocyte melanization. This Manduca sexta (Tobacco hawkmoth) protein is Phenoloxidase subunit 1.